Here is a 525-residue protein sequence, read N- to C-terminus: Histidine-rich glycoprotein (525 aa).

Residues 1-18 form the signal peptide; that stretch reads MKVLTTALLLVTLQCSHA. One can recognise a Cystatin 1 domain in the interval 19–122; sequence LSPTNCDASK…ESQDLSVNGY (104 aa). 5 cysteine pairs are disulfide-bonded: Cys24-Cys504, Cys78-Cys89, Cys103-Cys124, Cys201-Cys414, and Cys216-Cys239. An interaction with ATP5F1A region spans residues 41–84; that stretch reads GRRSGYTFQLLRVSDAHLDRVETATIYYLVLDVVESDCWVLSTK. Asn112 and Asn123 each carry an N-linked (GlcNAc...) asparagine glycan. The 106-residue stretch at 135–240 folds into the Cystatin 2 domain; sequence NTKDSPVLVD…TPEYTDLICE (106 aa). Ser145 is subject to Phosphoserine. An N-linked (GlcNAc...) asparagine glycan is attached at Asn200. A disordered region spans residues 275–445; it reads RDHHHTHKTH…GHSRKRGPGK (171 aa). 2 N-linked (GlcNAc...) asparagine glycosylation sites follow: Asn322 and Asn330. 2 stretches are compositionally biased toward basic residues: residues 339–392 and 426–443; these read HGQH…HGHH and QYHRGHGPPHGHSRKRGP. Position 438 is a phosphoserine (Ser438).

As to quaternary structure, interacts with THBS1 (via the TSP type I repeats); the interaction blocks the antiangiogenic effect of THBS1 with CD36. Interacts with HPSE; the interaction is enhanced at acidic pH, partially inhibits binding of HPSE to cell surface receptors and modulates its enzymatic activity. Interacts (via the HRR domain) with TMP1; the interaction partially mediates the antiangiogenic properties of HRG. Interacts with kappa and lambda light chains of IgG molecules. Interacts with ATP5F1A; the interaction occurs on the surface of T-cells and alters their cell morphology in concert with CONA. Binds IgG molecules containing kappa and lambda light chains and inhibits the formation of insoluble immunoglobulin complexes. Interacts with F12; the interaction, which is enhanced in the presence of zinc ions and inhibited by heparin-binding to HRG, inhibits factor XII autoactivation and contact-initiated coagulation. Interacts with PLG (via its Kringle domains); the interaction tethers PLG to the cell surface and enhances its activation. Interacts (via the HRR domain) with TPM1; the interaction appears to contribute to the antiangiogenic properties of the HRR domain. Interacts with THBS2; the interaction blocks the antiangiogenic effect of THBS2 with CD36. N-glycosylated. In terms of processing, proteolytic cleavage produces several HRG fragments which are mostly disulfide-linked and, therefore, not released. Cleavage by plasmin is inhibited in the presence of heparin, zinc ions or in an acidic environment. Cleavage reduces binding of HRG to heparan sulfate, but enhances the ability of HRG to bind and tether plasminogen to the cell surface. On platelet activation, releases a 33 kDa antiangiogenic peptide which encompasses the HRR. Also cleaved in the C-terminal by plasmin. Expressed in liver, blood plasma, serum and in platelets. Also present in fibrin clots, wound fluid from acute wounds and chronic leg ulcers.

It localises to the secreted. Functionally, plasma glycoprotein that binds a number of ligands such as heme, heparin, heparan sulfate, thrombospondin, plasminogen, and divalent metal ions. Inhibits rosette formation. Acts as an adapter protein and implicated in regulating many processes such as immune complex and pathogen clearance, cell adhesion, angiogenesis, coagulation and fibrinolysis. Mediates clearance of necrotic cells through enhancing the phagocytosis of necrotic cells in a heparan sulfate-dependent pathway. This process can be regulated by the presence of certain HRG ligands such as heparin and zinc ions. Binds to IgG subclasses of immunoglobins containing kappa and lambda light chains with different affinities regulating their clearance and inhibiting the formation of insoluble immune complexes. Tethers plasminogen to the cell surface. Binds T-cells and alters the cell morphology. Modulates angiogenesis by blocking the CD6-mediated antiangiongenic effect of thrombospondins, THBS1 and THBS2. This Rattus norvegicus (Rat) protein is Histidine-rich glycoprotein (Hrg).